An 89-amino-acid chain; its full sequence is Small ribosomal subunit protein uS15 (89 aa).

It belongs to the universal ribosomal protein uS15 family. Part of the 30S ribosomal subunit. Forms a bridge to the 50S subunit in the 70S ribosome, contacting the 23S rRNA.

Its function is as follows. One of the primary rRNA binding proteins, it binds directly to 16S rRNA where it helps nucleate assembly of the platform of the 30S subunit by binding and bridging several RNA helices of the 16S rRNA. Functionally, forms an intersubunit bridge (bridge B4) with the 23S rRNA of the 50S subunit in the ribosome. This chain is Small ribosomal subunit protein uS15, found in Oceanobacillus iheyensis (strain DSM 14371 / CIP 107618 / JCM 11309 / KCTC 3954 / HTE831).